The following is a 279-amino-acid chain: uncharacterized protein (279 aa).

The signal sequence occupies residues 1–31; it reads MLVQSRTLVTAILSCSLVFGTTVNGASVAIA.

This is an uncharacterized protein from Corynebacterium glutamicum (strain ATCC 13032 / DSM 20300 / JCM 1318 / BCRC 11384 / CCUG 27702 / LMG 3730 / NBRC 12168 / NCIMB 10025 / NRRL B-2784 / 534).